A 336-amino-acid chain; its full sequence is HTH-type transcriptional repressor PurR (336 aa).

The HTH lacI-type domain occupies 2–56 (ATIKDVAKMAGVSTTTVSHVINKTRFVAKDTEEAVLSAIKQLNYSPSAVARSLKV). The segment at residues 4–23 (IKDVAKMAGVSTTTVSHVIN) is a DNA-binding region (H-T-H motif). The DNA-binding element occupies 48-56 (SAVARSLKV). The hypoxanthine site is built by Tyr73, Lys188, Thr190, Phe219, and Asp273.

In terms of assembly, homodimer.

Its pathway is purine metabolism; purine nucleotide biosynthesis [regulation]. Functionally, is the main repressor of the genes involved in the de novo synthesis of purine nucleotides, regulating purB, purC, purEK, purF, purHD, purL, purMN and guaBA expression. PurR is allosterically activated to bind its cognate DNA by binding the purine corepressors, hypoxanthine or guanine, thereby effecting transcription repression. The sequence is that of HTH-type transcriptional repressor PurR from Haemophilus influenzae (strain PittGG).